Consider the following 579-residue polypeptide: MMSVQKANTVSRQKATGAHFTPDKLAEVIAKRILDYFKGEKNRVIRVLDPACGDGELLLAINKVAQSMNIQLELIGVDFDIDAINIANERLSRSGHKNFRLINKDFLEMVSEGDNYDLFNIEELEPVDIIIANPPYVRTQILGAEKAQKLREKFNLKGRVDLYQAFLVAMTQQLKSNGIIGVITSNRYLTTKGGGSTRKFLVSNFNILEIMDLGDSKFFEAAVLPAIFFGEKKNKEYQKENSNVPKFFKIYEQSDIEASSSVNSEFNSLIELLEVNKSGLYSVEDKTYSISLGKIISPENYKEPWILATEDEYEWFMKVNQNAYGFIEDFAHVKVGIKTTADSVFIRSDWGELPEEQIPEDKLLRPIISADQANKWSVSLVGNNKKVLYTHEIRDGQIKAINLEEFPRAKNYLESHKERLASRKYVLKANRNWYEIWVPHDPSLWDKPKIIFPDTSPEPKFFYEDKGSVVDGNCYWIIPKKENSNDILFLIMGICNSKFMSKYHDIAFQNKLYAGRRRYLTQYVNKYPIPDPESIYSKEIISLVRELVNNKKETQDINEIENRIEKLILRAFDIESLKY.

The protein belongs to the N(4)/N(6)-methyltransferase family.

It carries out the reaction a 2'-deoxyadenosine in DNA + S-adenosyl-L-methionine = an N(6)-methyl-2'-deoxyadenosine in DNA + S-adenosyl-L-homocysteine + H(+). Its function is as follows. A gamma subtype methylase, recognizes the double-stranded sequence 5'-ATCGAT-3', methylation on A-5 on both strands, and protects the DNA from cleavage by the BanIII endonuclease. The polypeptide is Type II methyltransferase M.BseCI (Geobacillus stearothermophilus (Bacillus stearothermophilus)).